A 271-amino-acid polypeptide reads, in one-letter code: Aquaporin-1 (271 aa).

Residues 1 to 11 (MASEFKKKIFW) are Cytoplasmic-facing. The chain crosses the membrane as a helical span at residues 12–29 (RAVVAEFLAMTLFIFISI). Topologically, residues 30-48 (GSALGFQYPVRNNQTSGAA) are extracellular. The N-linked (GlcNAc...) asparagine glycan is linked to Asn42. Residues 49–67 (QDNVKVSLAFGLSIATLAQ) form a helical membrane-spanning segment. Over 68 to 70 (SVG) the chain is Cytoplasmic. An intramembrane segment occupies 71–84 (HISGAHLNPAVTLG). Residues 78–80 (NPA) carry the NPA 1 motif. Residues 85-92 (LLLSCQIS) are Cytoplasmic-facing. A helical membrane pass occupies residues 93 to 111 (VLRAVMYIIAQCVGAIVAT). Residues 112 to 135 (AILSGITSSLPGNSLGLNSLAPGV) are Extracellular-facing. Residues 136 to 155 (DSGQGLGIEIIGTLQLVLCV) form a helical membrane-spanning segment. Residues 156-165 (LATTDRRRRD) are Cytoplasmic-facing. The chain crosses the membrane as a helical span at residues 166-183 (LGGSAPLAIGFSVALGHL). Topologically, residues 184 to 188 (LAIDY) are extracellular. Residues 189–201 (TGCGINPARSFGS) lie within the membrane without spanning it. Positions 194–196 (NPA) match the NPA 2 motif. At 202 to 208 (AVITHNF) the chain is on the extracellular side. A helical transmembrane segment spans residues 209-226 (QDHWVFWVGPFIGGALAV). Topologically, residues 227–271 (LIYDFILAPRSSDLTDRVKVWTSGQVEEYDLDGDDINSRVEMKPK) are cytoplasmic. Ser249 bears the Phosphoserine mark. Phosphotyrosine is present on Tyr255. At Ser264 the chain carries Phosphoserine.

Belongs to the MIP/aquaporin (TC 1.A.8) family. As to quaternary structure, homotetramer; each monomer provides an independent water pore. Component of the ankyrin-1 complex in the erythrocyte, composed of ANK1, RHCE, RHAG, SLC4A1, EPB42, GYPA, GYPB and AQP1. Interacts with EPHB2; involved in endolymph production in the inner ear. Identified in a complex with STOM. Interacts (via the N-terminal) with ANK1 (via ANK 1-5 repeats). Interacts (via the C-terminal) with EPB42.

The protein resides in the cell membrane. The catalysed reaction is H2O(in) = H2O(out). It catalyses the reaction nitric oxide(out) = nitric oxide(in). It carries out the reaction CO2(out) = CO2(in). The enzyme catalyses glycerol(in) = glycerol(out). The catalysed reaction is H2O2(out) = H2O2(in). It catalyses the reaction K(+)(in) = K(+)(out). It carries out the reaction Na(+)(in) = Na(+)(out). Forms a water channel that facilitates the transport of water across cell membranes, playing a crucial role in water homeostasis in various tissues. Could also be permeable to small solutes including hydrogen peroxide, glycerol and gases such as amonnia (NH3), nitric oxide (NO) and carbon dioxide (CO2). Recruited to the ankyrin-1 complex, a multiprotein complex of the erythrocyte membrane, it could be part of a CO2 metabolon, linking facilitated diffusion of CO2 across the membrane, anion exchange of Cl(-)/HCO3(-) and interconversion of dissolved CO2 and carbonic acid in the cytosol. In vitro, it shows non-selective gated cation channel activity and may be permeable to cations like K(+) and Na(+) in vivo. This is Aquaporin-1 from Sus scrofa (Pig).